The following is a 387-amino-acid chain: Acetate kinase (387 aa).

Asn14 is a binding site for Mg(2+). Residue Lys21 participates in ATP binding. Substrate is bound at residue Arg80. The active-site Proton donor/acceptor is Asp137. Residues 197-201 (HLGNG), 271-273 (DFR), and 319-323 (GIGEN) each bind ATP. Position 373 (Glu373) interacts with Mg(2+).

This sequence belongs to the acetokinase family. In terms of assembly, homodimer. It depends on Mg(2+) as a cofactor. The cofactor is Mn(2+).

Its subcellular location is the cytoplasm. The enzyme catalyses acetate + ATP = acetyl phosphate + ADP. It participates in metabolic intermediate biosynthesis; acetyl-CoA biosynthesis; acetyl-CoA from acetate: step 1/2. Its function is as follows. Catalyzes the formation of acetyl phosphate from acetate and ATP. Can also catalyze the reverse reaction. This is Acetate kinase from Mycobacterium avium (strain 104).